Reading from the N-terminus, the 223-residue chain is Charged multivesicular body protein 3 (223 aa).

Residue Gly-2 is the site of N-myristoyl glycine attachment. An intramolecular interaction with C-terminus region spans residues 2–113; it reads GLFGKTQEKP…LQKSTEVMKA (112 aa). The stretch at 22–54 forms a coiled coil; it reads KIRKEMRVVDRQIRDIQREEEKVKRSVKDAAKK. Important for autoinhibitory function regions lie at residues 59 to 64 and 168 to 169; these read VCVVLA and IL. The stretch at 149–223 forms a coiled coil; that stretch reads ESMDDQEEME…MQSRLATLRS (75 aa). An intramolecular interaction with N-terminus region spans residues 151–221; it reads MDDQEEMEEA…EAMQSRLATL (71 aa). Positions 151–223 are interaction with VPS4A; that stretch reads MDDQEEMEEA…MQSRLATLRS (73 aa). A Glycyl lysine isopeptide (Lys-Gly) (interchain with G-Cter in ubiquitin) cross-link involves residue Lys-179. Positions 180–223 are disordered; sequence APSKVTDALPEPEPAGAMAASEGDEEDDEEDLEAMQSRLATLRS. Interaction with STAMBP regions lie at residues 196–223, 204–208, and 222–223; these read AMAA…TLRS, EEDDE, and RS. Ser-200 bears the Phosphoserine mark. The MIT-interacting motif motif lies at 201 to 212; that stretch reads EGDEEDDEEDLE. The segment covering 201 to 212 has biased composition (acidic residues); that stretch reads EGDEEDDEEDLE.

The protein belongs to the SNF7 family. In terms of assembly, probable core component of the endosomal sorting required for transport complex III (ESCRT-III). ESCRT-III components are thought to multimerize to form a flat lattice on the perimeter membrane of the endosome. Several assembly forms of ESCRT-III may exist that interact and act sequentially. Forms a metastable monomer in solution; its core structure (without part of the putative autoinhibitory C-terminal acidic region) oligomerizes into a flat lattice via two different dimerization interfaces. In vitro, heteromerizes with CHMP2A (but not CHMP4) to form helical tubular structures that expose membrane-interacting sites on the outside whereas VPS4B can associate on the inside of the tubule. May interact with IGFBP7; the relevance of such interaction however remains unclear. Interacts with CHMP2A. Interacts with CHMP4A; the interaction requires the release of CHMP4A autoinhibition. Interacts with VPS4A. Interacts with STAMBP; the interaction appears to relieve the autoinhibition of CHMP3. Interacts with VTA1.

The protein localises to the cytoplasm. Its subcellular location is the cytosol. The protein resides in the membrane. It localises to the endosome. It is found in the late endosome membrane. In terms of biological role, probable core component of the endosomal sorting required for transport complex III (ESCRT-III) which is involved in multivesicular bodies (MVBs) formation and sorting of endosomal cargo proteins into MVBs. MVBs contain intraluminal vesicles (ILVs) that are generated by invagination and scission from the limiting membrane of the endosome and mostly are delivered to lysosomes enabling degradation of membrane proteins, such as stimulated growth factor receptors, lysosomal enzymes and lipids. The MVB pathway appears to require the sequential function of ESCRT-O, -I,-II and -III complexes. ESCRT-III proteins mostly dissociate from the invaginating membrane before the ILV is released. The ESCRT machinery also functions in topologically equivalent membrane fission events, such as the terminal stages of cytokinesis. ESCRT-III proteins are believed to mediate the necessary vesicle extrusion and/or membrane fission activities, possibly in conjunction with the AAA ATPase VPS4. Selectively binds to phosphatidylinositol 3,5-bisphosphate PtdIns(3,5)P2 and PtdIns(3,4)P2 in preference to other phosphoinositides tested. Involved in late stages of cytokinesis. Plays a role in endosomal sorting/trafficking of EGF receptor. In Rattus norvegicus (Rat), this protein is Charged multivesicular body protein 3 (Chmp3).